The primary structure comprises 346 residues: S-adenosylmethionine:tRNA ribosyltransferase-isomerase (346 aa).

It belongs to the QueA family. In terms of assembly, monomer.

The protein resides in the cytoplasm. The enzyme catalyses 7-aminomethyl-7-carbaguanosine(34) in tRNA + S-adenosyl-L-methionine = epoxyqueuosine(34) in tRNA + adenine + L-methionine + 2 H(+). It functions in the pathway tRNA modification; tRNA-queuosine biosynthesis. In terms of biological role, transfers and isomerizes the ribose moiety from AdoMet to the 7-aminomethyl group of 7-deazaguanine (preQ1-tRNA) to give epoxyqueuosine (oQ-tRNA). This chain is S-adenosylmethionine:tRNA ribosyltransferase-isomerase, found in Chloroherpeton thalassium (strain ATCC 35110 / GB-78).